A 303-amino-acid chain; its full sequence is UDP-N-acetylenolpyruvoylglucosamine reductase (303 aa).

The FAD-binding PCMH-type domain occupies 27 to 217 (KVGGISQVFY…QTVRKLTQPI (191 aa)). Arg175 is a catalytic residue. Ser224 acts as the Proton donor in catalysis. The active site involves Glu294.

Belongs to the MurB family. FAD is required as a cofactor.

It localises to the cytoplasm. The catalysed reaction is UDP-N-acetyl-alpha-D-muramate + NADP(+) = UDP-N-acetyl-3-O-(1-carboxyvinyl)-alpha-D-glucosamine + NADPH + H(+). The protein operates within cell wall biogenesis; peptidoglycan biosynthesis. Cell wall formation. This Orientia tsutsugamushi (strain Ikeda) (Rickettsia tsutsugamushi) protein is UDP-N-acetylenolpyruvoylglucosamine reductase.